The chain runs to 327 residues: Probable cell division protein WhiA (327 aa).

The segment at residues 275 to 308 (SLEELGRLADPVMTKDAVAGRIRRLLSMADRKAK) is a DNA-binding region (H-T-H motif). The interval 307 to 327 (AKTEGIPDTESAVTPELLEEA) is disordered.

Belongs to the WhiA family.

Its function is as follows. Involved in cell division and chromosome segregation. This is Probable cell division protein WhiA from Mycobacteroides abscessus (strain ATCC 19977 / DSM 44196 / CCUG 20993 / CIP 104536 / JCM 13569 / NCTC 13031 / TMC 1543 / L948) (Mycobacterium abscessus).